The chain runs to 102 residues: NAD(P)H-quinone oxidoreductase subunit 4L (102 aa).

3 consecutive transmembrane segments (helical) span residues 4–24, 33–53, and 65–85; these read LQFF…GLIV, MSIE…SNFV, and VFVI…VLGI.

Belongs to the complex I subunit 4L family. As to quaternary structure, NDH-1 can be composed of about 15 different subunits; different subcomplexes with different compositions have been identified which probably have different functions.

Its subcellular location is the cellular thylakoid membrane. The enzyme catalyses a plastoquinone + NADH + (n+1) H(+)(in) = a plastoquinol + NAD(+) + n H(+)(out). The catalysed reaction is a plastoquinone + NADPH + (n+1) H(+)(in) = a plastoquinol + NADP(+) + n H(+)(out). NDH-1 shuttles electrons from an unknown electron donor, via FMN and iron-sulfur (Fe-S) centers, to quinones in the respiratory and/or the photosynthetic chain. The immediate electron acceptor for the enzyme in this species is believed to be plastoquinone. Couples the redox reaction to proton translocation, and thus conserves the redox energy in a proton gradient. Cyanobacterial NDH-1 also plays a role in inorganic carbon-concentration. This is NAD(P)H-quinone oxidoreductase subunit 4L from Synechococcus sp. (strain JA-3-3Ab) (Cyanobacteria bacterium Yellowstone A-Prime).